Consider the following 101-residue polypeptide: Ubiquitin-related modifier 1 homolog (101 aa).

Gly-101 bears the 1-thioglycine mark. Residue Gly-101 forms a Glycyl lysine isopeptide (Gly-Lys) (interchain with K-? in acceptor proteins) linkage.

It belongs to the URM1 family. In terms of assembly, interacts with cer. In terms of processing, C-terminal thiocarboxylation occurs in 2 steps, it is first acyl-adenylated (-COAMP) via the hesA/moeB/thiF part of the MOCS3 homolog, then thiocarboxylated (-COSH) via the rhodanese domain of the MOCS3 homolog.

The protein localises to the cytoplasm. Its pathway is tRNA modification; 5-methoxycarbonylmethyl-2-thiouridine-tRNA biosynthesis. Functionally, acts as a sulfur carrier required for 2-thiolation of mcm(5)S(2)U at tRNA wobble positions of cytosolic tRNA(Lys), tRNA(Glu) and tRNA(Gln). Serves as sulfur donor in tRNA 2-thiolation reaction by being thiocarboxylated (-COSH) at its C-terminus by MOCS3. The sulfur is then transferred to tRNA to form 2-thiolation of mcm(5)S(2)U. Also acts as a ubiquitin-like protein (UBL) that is covalently conjugated via an isopeptide bond to lysine residues of target proteins such as Prx2/Jafrac1, Ciao1, Eip71CD and GILT1. The thiocarboxylated form serves as substrate for conjugation and oxidative stress specifically induces the formation of UBL-protein conjugates. This chain is Ubiquitin-related modifier 1 homolog, found in Drosophila ananassae (Fruit fly).